The chain runs to 167 residues: Transcription antitermination protein NusB (167 aa).

The segment at 1 to 32 is disordered; the sequence is MSDTPETGKPAAGTKPAARTEAKAPPKSARRR.

Belongs to the NusB family.

Involved in transcription antitermination. Required for transcription of ribosomal RNA (rRNA) genes. Binds specifically to the boxA antiterminator sequence of the ribosomal RNA (rrn) operons. The sequence is that of Transcription antitermination protein NusB from Cupriavidus pinatubonensis (strain JMP 134 / LMG 1197) (Cupriavidus necator (strain JMP 134)).